The following is a 647-amino-acid chain: Serine/threonine-protein kinase PLK3 (647 aa).

The tract at residues 1–56 is disordered; sequence MEPAAGFLSPRPFPRAAAPSSPPAGPGPPASASPRSEPGVLAGPQTPDASRLITDP. Residues 20–31 show a composition bias toward pro residues; that stretch reads SSPPAGPGPPAS. Residues 62–314 form the Protein kinase domain; sequence YIKGRLLGKG…IEQILRHDFF (253 aa). Residues 68-76 and K91 each bind ATP; that span reads LGKGGFARC. Catalysis depends on D185, which acts as the Proton acceptor. POLO box domains follow at residues 464–542 and 563–646; these read WVSK…YMEQ and LLLQ…DRSP.

It belongs to the protein kinase superfamily. Ser/Thr protein kinase family. CDC5/Polo subfamily. Interacts with GOLGB1. Interacts (via the POLO-box domain) with CIB1; leading to inhibit PLK3 kinase activity. Post-translationally, phosphorylated in an ATM-dependent manner following DNA damage. Phosphorylated as cells enter mitosis and dephosphorylated as cells exit mitosis. As to expression, constitutively expressed in post-mitotic neurons.

Its subcellular location is the cell projection. It localises to the dendrite. The protein resides in the cytoplasm. The protein localises to the nucleus. It is found in the nucleolus. Its subcellular location is the golgi apparatus. It localises to the cytoskeleton. The protein resides in the microtubule organizing center. The protein localises to the centrosome. It carries out the reaction L-seryl-[protein] + ATP = O-phospho-L-seryl-[protein] + ADP + H(+). It catalyses the reaction L-threonyl-[protein] + ATP = O-phospho-L-threonyl-[protein] + ADP + H(+). Serine/threonine-protein kinase involved in cell cycle regulation, response to stress and Golgi disassembly. Polo-like kinases act by binding and phosphorylating proteins that are already phosphorylated on a specific motif recognized by the POLO box domains. Phosphorylates ATF2, BCL2L1, CDC25A, CDC25C, CHEK2, HIF1A, JUN, p53/TP53, p73/TP73, PTEN, TOP2A and VRK1. Involved in cell cycle regulation: required for entry into S phase and cytokinesis. Phosphorylates BCL2L1, leading to regulate the G2 checkpoint and progression to cytokinesis during mitosis. Plays a key role in response to stress: rapidly activated upon stress stimulation, such as ionizing radiation, reactive oxygen species (ROS), hyperosmotic stress, UV irradiation and hypoxia. Involved in DNA damage response and G1/S transition checkpoint by phosphorylating CDC25A, p53/TP53 and p73/TP73. Phosphorylates p53/TP53 in response to reactive oxygen species (ROS), thereby promoting p53/TP53-mediated apoptosis. Phosphorylates CHEK2 in response to DNA damage, promoting the G2/M transition checkpoint. Phosphorylates the transcription factor p73/TP73 in response to DNA damage, leading to inhibit p73/TP73-mediated transcriptional activation and pro-apoptotic functions. Phosphorylates HIF1A and JUN is response to hypoxia. Phosphorylates ATF2 following hyperosmotic stress in corneal epithelium. Also involved in Golgi disassembly during the cell cycle: part of a MEK1/MAP2K1-dependent pathway that induces Golgi fragmentation during mitosis by mediating phosphorylation of VRK1. May participate in endomitotic cell cycle, a form of mitosis in which both karyokinesis and cytokinesis are interrupted and is a hallmark of megakaryocyte differentiation, via its interaction with CIB1. The sequence is that of Serine/threonine-protein kinase PLK3 (Plk3) from Rattus norvegicus (Rat).